The primary structure comprises 646 residues: Peptidylprolyl isomerase domain and WD repeat-containing protein 1 (646 aa).

A disordered region spans residues 1 to 30 (MAAESGSDFQQRRRRRRDPEEPEKTELSER). At alanine 2 the chain carries N-acetylalanine. Residues 17-30 (RDPEEPEKTELSER) show a composition bias toward basic and acidic residues. WD repeat units follow at residues 80-118 (ASMY…FWKK), 124-162 (EFVK…VFDV), 168-208 (INML…IYDG), 213-252 (QPLH…YWTG), 271-309 (TDLY…IFRF), 345-386 (AVER…VETN), and 401-453 (MQLA…MFTK). Over residues 455–478 (EPEDTKSADSDRDVFNEKPSKEEV) the composition is skewed to basic and acidic residues. The tract at residues 455–490 (EPEDTKSADSDRDVFNEKPSKEEVMAATQAEGPKRV) is disordered. One can recognise a PPIase cyclophilin-type domain in the interval 490–645 (VSDSAIIHTS…EDVSIINITV (156 aa)).

The protein belongs to the cyclophilin-type PPIase family. PPIL1 subfamily. Identified in the spliceosome C complex.

Its subcellular location is the nucleus. It carries out the reaction [protein]-peptidylproline (omega=180) = [protein]-peptidylproline (omega=0). With respect to regulation, inhibited by cyclosporin A (CsA). PPIase that catalyzes the cis-trans isomerization of proline imidic peptide bonds in oligopeptides and may therefore assist protein folding. May be involved in pre-mRNA splicing. In Homo sapiens (Human), this protein is Peptidylprolyl isomerase domain and WD repeat-containing protein 1.